We begin with the raw amino-acid sequence, 211 residues long: MSALRQKLDALIEQTDLQVNERQREQLLGYVELLNKWNKAYNLTSVRDPQDMLVKHILDSIVVAPHLDGERFIDVGTGPGLPGIPLAIMHPEKTFFLLDSLGKRIRFIKQVLHELKIENVTTVQSRVEEFQPEEKFDGVLSRAFASMTDMVEWCHHLPKTGQGVFLALKGLHPKDEIDQLPEWCSVTEIISLTVPELEGDRHLVILSRKDN.

S-adenosyl-L-methionine is bound by residues Gly-76, Leu-81, Val-127–Glu-128, and Arg-142.

It belongs to the methyltransferase superfamily. RNA methyltransferase RsmG family.

It localises to the cytoplasm. It carries out the reaction guanosine(527) in 16S rRNA + S-adenosyl-L-methionine = N(7)-methylguanosine(527) in 16S rRNA + S-adenosyl-L-homocysteine. In terms of biological role, specifically methylates the N7 position of guanine in position 527 of 16S rRNA. The protein is Ribosomal RNA small subunit methyltransferase G of Vibrio vulnificus (strain CMCP6).